A 2073-amino-acid chain; its full sequence is Putative mediator of RNA polymerase II transcription subunit 26 (2073 aa).

4 disordered regions span residues 22–94 (IERM…QSFQ), 115–146 (PQLQ…TYNF), 241–260 (QMQQ…QQQQ), and 287–334 (QQHQ…QNQQ). The segment covering 31–41 (NQSVEMDSHTF) has biased composition (polar residues). Positions 42-78 (NNNNNNNNNNNINNNNNINNNNNNNNNNNNNNNSINN) are enriched in low complexity. 2 coiled-coil regions span residues 166–453 (IQQQ…QQQQ) and 674–710 (LRQQ…NQTI). 2 stretches are compositionally biased toward low complexity: residues 287 to 314 (QQHQ…QHQQ) and 322 to 334 (QQHQ…QNQQ). Disordered regions lie at residues 796–879 (KGNN…NNDI), 908–1175 (INNN…NNNI), 1215–1260 (NTTS…TVIN), 1403–1475 (NTSS…LPPK), 1489–1539 (KLST…SLSP), 1551–1571 (AAAA…KSLS), 1587–1645 (KSQT…SKGK), 1804–1836 (INNN…TGSS), 1868–1935 (NNNN…GYNN), and 2019–2073 (FNNN…QSYS). Composition is skewed to low complexity over residues 798–870 (NNNN…NTNN) and 923–937 (SSSS…NIPN). The segment covering 938–947 (KPKKPVKSNS) has biased composition (basic residues). Acidic residues predominate over residues 953–963 (LLEDNDSDSSD). Low complexity-rich tracts occupy residues 964 to 977 (SSDS…SDSS), 1027 to 1038 (ASTATSTTTTTT), 1047 to 1065 (PTSK…TSIT), 1073 to 1115 (STTS…SSSS), and 1127 to 1156 (KKPI…STST). The span at 1157–1166 (LGNKNLGTPS) shows a compositional bias: polar residues. Composition is skewed to low complexity over residues 1215 to 1258 (NTTS…TTTV) and 1403 to 1424 (NTSS…NGNN). A compositionally biased stretch (basic and acidic residues) spans 1425–1440 (SDKKRNRDQPITDTSK). 4 stretches are compositionally biased toward low complexity: residues 1444–1465 (SSSS…RSSS), 1490–1520 (LSTP…STIP), 1527–1539 (SSSS…SLSP), and 1551–1560 (AAAAKKQQTQ). Polar residues predominate over residues 1561 to 1571 (ELSDSTAKSLS). Low complexity-rich tracts occupy residues 1599–1609 (SSNVSGKSDSS) and 1804–1817 (INNN…SPDE). A coiled-coil region spans residues 1884–1930 (NNMGNMNNQFNNMNNNNNNNQFNNGYNNNNNNNNNNNNNNNNNNNNM).

This sequence belongs to the Mediator complex subunit 26 family. Component of the Mediator complex.

It localises to the nucleus. Functionally, component of the Mediator complex, a coactivator involved in the regulated transcription of nearly all RNA polymerase II-dependent genes. Mediator functions as a bridge to convey information from gene-specific regulatory proteins to the basal RNA polymerase II transcription machinery. Mediator is recruited to promoters by direct interactions with regulatory proteins and serves as a scaffold for the assembly of a functional preinitiation complex with RNA polymerase II and the general transcription factors. The chain is Putative mediator of RNA polymerase II transcription subunit 26 (med26) from Dictyostelium discoideum (Social amoeba).